A 612-amino-acid chain; its full sequence is Transcription factor Sp2 (612 aa).

Ser-78 bears the Phosphoserine mark. Disordered stretches follow at residues 166–195 and 226–250; these read TTPS…PVQS and GPAQ…RKKS. The span at 184–195 shows a compositional bias: polar residues; that stretch reads QKSSTTTTPVQS. The short motif at 360–368 is the 9aaTAD; inactive element; it reads GEVQTVLVQ. 3 consecutive C2H2-type zinc fingers follow at residues 524-548, 554-578, and 584-606; these read HVCH…VRLH, FVCN…ARTH, and FECA…YKTH.

The protein belongs to the Sp1 C2H2-type zinc-finger protein family.

It localises to the nucleus. Functionally, binds to GC box promoters elements and selectively activates mRNA synthesis from genes that contain functional recognition sites. This Mus musculus (Mouse) protein is Transcription factor Sp2 (Sp2).